Consider the following 195-residue polypeptide: Adenylate kinase (195 aa).

10–15 (GSGKGT) contributes to the ATP binding site. Positions 30–59 (STGDILRAERAAGTLLGQQAQSYMDRGELV) are NMP. AMP is bound by residues T31, R36, 57 to 59 (ELV), 85 to 88 (GFPR), and Q92. Residues 126–140 (NRAKQAVNGQQRSDD) form an LID region. R127 provides a ligand contact to ATP. R137 and R148 together coordinate AMP. An ATP-binding site is contributed by R176.

It belongs to the adenylate kinase family. Monomer.

It localises to the cytoplasm. The enzyme catalyses AMP + ATP = 2 ADP. It participates in purine metabolism; AMP biosynthesis via salvage pathway; AMP from ADP: step 1/1. Catalyzes the reversible transfer of the terminal phosphate group between ATP and AMP. Plays an important role in cellular energy homeostasis and in adenine nucleotide metabolism. This is Adenylate kinase from Thermosynechococcus vestitus (strain NIES-2133 / IAM M-273 / BP-1).